The chain runs to 247 residues: Triosephosphate isomerase (247 aa).

Substrate-binding residues include Asn10 and Lys12. The Electrophile role is filled by His94. Residue Glu164 is the Proton acceptor of the active site.

It belongs to the triosephosphate isomerase family. Homodimer.

The enzyme catalyses D-glyceraldehyde 3-phosphate = dihydroxyacetone phosphate. Its pathway is carbohydrate biosynthesis; gluconeogenesis. It functions in the pathway carbohydrate degradation; glycolysis; D-glyceraldehyde 3-phosphate from glycerone phosphate: step 1/1. In Drosophila simulans (Fruit fly), this protein is Triosephosphate isomerase (Tpi).